The chain runs to 664 residues: Probable LRR receptor-like serine/threonine-protein kinase At1g63430 (664 aa).

A signal peptide spans 1-22 (MRSKYFCSLALVLGLFFVSCDG). Over 23–288 (FASNEVQALR…KHHRASKPKW (266 aa)) the chain is Extracellular. N-linked (GlcNAc...) asparagine glycosylation is present at N75. 4 LRR repeats span residues 94–116 (YLQE…IGNL), 118–140 (NLKI…IGSL), 142–165 (GIMI…GNLK), and 166–178 (YLRE…NRLQ). N197 carries an N-linked (GlcNAc...) asparagine glycan. Residues 289–309 (LLALEIVTGSMVGLLLLVALF) traverse the membrane as a helical segment. At 310 to 664 (SAVHRWNNRS…LAWAELALDS (355 aa)) the chain is on the cytoplasmic side. The Protein kinase domain occupies 360 to 642 (EDFSNIIGLS…ELCETLESRI (283 aa)).

It belongs to the protein kinase superfamily. Ser/Thr protein kinase family.

The protein resides in the cell membrane. It carries out the reaction L-seryl-[protein] + ATP = O-phospho-L-seryl-[protein] + ADP + H(+). The enzyme catalyses L-threonyl-[protein] + ATP = O-phospho-L-threonyl-[protein] + ADP + H(+). The sequence is that of Probable LRR receptor-like serine/threonine-protein kinase At1g63430 from Arabidopsis thaliana (Mouse-ear cress).